Here is a 402-residue protein sequence, read N- to C-terminus: Arginine biosynthesis bifunctional protein ArgJ (402 aa).

T152, K178, T189, E275, N397, and T402 together coordinate substrate. The Nucleophile role is filled by T189.

It belongs to the ArgJ family. In terms of assembly, heterotetramer of two alpha and two beta chains.

It is found in the cytoplasm. It carries out the reaction N(2)-acetyl-L-ornithine + L-glutamate = N-acetyl-L-glutamate + L-ornithine. The catalysed reaction is L-glutamate + acetyl-CoA = N-acetyl-L-glutamate + CoA + H(+). It participates in amino-acid biosynthesis; L-arginine biosynthesis; L-ornithine and N-acetyl-L-glutamate from L-glutamate and N(2)-acetyl-L-ornithine (cyclic): step 1/1. Its pathway is amino-acid biosynthesis; L-arginine biosynthesis; N(2)-acetyl-L-ornithine from L-glutamate: step 1/4. In terms of biological role, catalyzes two activities which are involved in the cyclic version of arginine biosynthesis: the synthesis of N-acetylglutamate from glutamate and acetyl-CoA as the acetyl donor, and of ornithine by transacetylation between N(2)-acetylornithine and glutamate. In Lactiplantibacillus plantarum (strain ATCC BAA-793 / NCIMB 8826 / WCFS1) (Lactobacillus plantarum), this protein is Arginine biosynthesis bifunctional protein ArgJ.